Reading from the N-terminus, the 349-residue chain is Trans-enoyl reductase phmE (349 aa).

55-58 (CDWK) contacts NADP(+). Position 143–150 (143–150 (TGIGTMGL)) interacts with substrate. NADP(+) is bound by residues 182–185 (SPKN), Y200, and 247–248 (LE). 267–271 (GMAIL) serves as a coordination point for substrate. 336–337 (VS) lines the NADP(+) pocket.

It belongs to the zinc-containing alcohol dehydrogenase family. As to quaternary structure, monomer.

It functions in the pathway mycotoxin biosynthesis. Functionally, trans-enoyl reductase; part of the gene cluster that mediates the biosynthesis of the mycotoxins phomacins, leucine-derived cytochalasans with potent actin polymerization-inhibitory activities and monocot-specific antigerminative activities. The first step in the pathway is catalyzed by the hybrid PKS-NRPS phmA, assisted by the enoyl reductase phmE, that are responsible for fusion of the leucine precursor and the polyketide backbone to produce a 2-pyrrolidone intermediate. The polyketide synthase module (PKS) of phmA is responsible for the synthesis of the polyketide backbone and the downstream nonribosomal peptide synthetase (NRPS) amidates the carboxyl end of the polyketide with the leucine precursor. Because phmA lacks a designated enoylreductase (ER) domain, the required activity is provided the enoyl reductase phmE. Reduction by the hydrolyase phmG, followed by dehydration and intra-molecular Diels-Alder cyclization by the Diels-Alderase phmD then yield the required isoindolone-fused macrocycle. A number of oxidative steps catalyzed by the tailoring cytochrome P450 monooxygenase phmB, the FAD-linked oxidoreductase phmC and the short-chain dehydrogenase/reductase phmF, are further required to afford the final products, phomacin D and phomacin E. This Phaeosphaeria nodorum (strain SN15 / ATCC MYA-4574 / FGSC 10173) (Glume blotch fungus) protein is Trans-enoyl reductase phmE.